Here is a 190-residue protein sequence, read N- to C-terminus: Pancreatic IgW, short secretory form (190 aa).

One can recognise an Ig-like C1-type domain in the interval 53–145 (PNITALVPSV…PPSNFRSMIS (93 aa)). The N-linked (GlcNAc...) asparagine glycan is linked to Asn-54. A disulfide bond links Cys-74 and Cys-131. N-linked (GlcNAc...) asparagine glycosylation is present at Asn-179.

As to expression, expressed in pancreas, spleen, epigonal organ and at low levels in several other tissues.

It localises to the secreted. The polypeptide is Pancreatic IgW, short secretory form (Ginglymostoma cirratum (Nurse shark)).